Here is a 126-residue protein sequence, read N- to C-terminus: Large ribosomal subunit protein uL22 (126 aa).

Belongs to the universal ribosomal protein uL22 family. In terms of assembly, part of the 50S ribosomal subunit.

Functionally, this protein binds specifically to 23S rRNA; its binding is stimulated by other ribosomal proteins, e.g. L4, L17, and L20. It is important during the early stages of 50S assembly. It makes multiple contacts with different domains of the 23S rRNA in the assembled 50S subunit and ribosome. The globular domain of the protein is located near the polypeptide exit tunnel on the outside of the subunit, while an extended beta-hairpin is found that lines the wall of the exit tunnel in the center of the 70S ribosome. This is Large ribosomal subunit protein uL22 from Caulobacter vibrioides (strain ATCC 19089 / CIP 103742 / CB 15) (Caulobacter crescentus).